The chain runs to 467 residues: H(+)/Cl(-) exchange transporter ClcA (467 aa).

Residues 1 to 30 are Cytoplasmic-facing; that stretch reads MTKRERIVKSVLAHVPKDAINQFVSRGSTP. The helical transmembrane segment at 31 to 67 threads the bilayer; that stretch reads FSVLIMAAIVGTLAGFVGTYFELAVHFVSETRTEWLR. Over 68-74 the chain is Periplasmic; sequence SEIGSVL. The chain crosses the membrane as a helical span at residues 75 to 98; sequence PLWLAAVLISALLAFIGYFLVHRF. The Selectivity filter part_1 signature appears at 104–108; sequence GSGIP. S105 is a chloride binding site. The segment at residues 107–114 is an intramembrane region (helical); that stretch reads IPEIEGAM. Topologically, residues 115 to 121 are cytoplasmic; sequence DNIRPVR. 2 helical membrane-spanning segments follow: residues 122 to 139 and 146 to 164; these read WWRV…ALGS and EGPT…TDIF. A Selectivity filter part_2 motif is present at residues 144 to 148; sequence GREGP. The Cytoplasmic portion of the chain corresponds to 165-174; sequence RVKDDDTRHS. Intramembrane regions (helical) lie at residues 175–187 and 191–199; these read LLAS…LAAA and PLAGIMFVV. The Cytoplasmic segment spans residues 200–212; sequence EEMRPQFRYSLIS. The helical transmembrane segment at 213–230 threads the bilayer; the sequence is IRAVIISAIMANIVFRAI. The Periplasmic segment spans residues 231–250; sequence NGQDAVITMPQYQSPALQTL. A helical transmembrane segment spans residues 251 to 279; the sequence is WLFLLLGALFGVFGVIFNKLITVAQDSFV. The Cytoplasmic portion of the chain corresponds to 280 to 285; sequence AIHKND. A helical transmembrane segment spans residues 286–307; it reads RKRYLITGSILGGVFGLLLLYV. The Periplasmic portion of the chain corresponds to 308–327; the sequence is PQLTGGGIALIPDVTTGNYS. A run of 2 helical transmembrane segments spans residues 328-347 and 353-374; these read ISIL…LCFG and GIFA…ASAD. A Selectivity filter part_3 motif is present at residues 353–357; sequence GIFAP. The chloride site is built by I354 and F355. The Periplasmic segment spans residues 375–384; that stretch reads VLLPTLDIEP. The segment at residues 385–399 is an intramembrane region (helical); it reads GVFAIAGMGALFAAT. The segment at residues 400–402 is an intramembrane region (note=Loop between two helices); sequence VRA. The helical intramembrane region spans 403 to 414; sequence PITGILLVIEMT. Residues 415–419 constitute an intramembrane region (note=Loop between two helices); the sequence is NNYYL. A helical membrane pass occupies residues 420 to 436; it reads ILPLIITCLGAVIVAQL. Topologically, residues 437-467 are cytoplasmic; that stretch reads LGGQPIYSQLLHRTLKNDKLRQQDLPENQAS. Y443 contacts chloride.

Belongs to the chloride channel (TC 2.A.49) family. ClcA subfamily. As to quaternary structure, homodimer.

It is found in the cell inner membrane. It carries out the reaction 2 chloride(in) + H(+)(out) = 2 chloride(out) + H(+)(in). Proton-coupled chloride transporter. Functions as antiport system and exchanges two chloride ions for 1 proton. Probably acts as an electrical shunt for an outwardly-directed proton pump that is linked to amino acid decarboxylation, as part of the extreme acid resistance (XAR) response. The protein is H(+)/Cl(-) exchange transporter ClcA of Vibrio parahaemolyticus serotype O3:K6 (strain RIMD 2210633).